A 235-amino-acid polypeptide reads, in one-letter code: tRNA pseudouridine synthase B (235 aa).

The active-site Nucleophile is Asp45.

The protein belongs to the pseudouridine synthase TruB family. Type 1 subfamily.

The catalysed reaction is uridine(55) in tRNA = pseudouridine(55) in tRNA. Functionally, responsible for synthesis of pseudouridine from uracil-55 in the psi GC loop of transfer RNAs. The polypeptide is tRNA pseudouridine synthase B (Chlamydia abortus (strain DSM 27085 / S26/3) (Chlamydophila abortus)).